We begin with the raw amino-acid sequence, 343 residues long: Glycerol-3-phosphate dehydrogenase [NAD(P)+] (343 aa).

The NADPH site is built by S15, F16, R36, and K110. Sn-glycerol 3-phosphate-binding residues include K110 and G138. A142 contributes to the NADPH binding site. Sn-glycerol 3-phosphate is bound by residues K193, D246, S256, R257, and N258. The Proton acceptor role is filled by K193. R257 is an NADPH binding site. E283 provides a ligand contact to NADPH.

Belongs to the NAD-dependent glycerol-3-phosphate dehydrogenase family.

It localises to the cytoplasm. The enzyme catalyses sn-glycerol 3-phosphate + NAD(+) = dihydroxyacetone phosphate + NADH + H(+). It catalyses the reaction sn-glycerol 3-phosphate + NADP(+) = dihydroxyacetone phosphate + NADPH + H(+). The protein operates within membrane lipid metabolism; glycerophospholipid metabolism. In terms of biological role, catalyzes the reduction of the glycolytic intermediate dihydroxyacetone phosphate (DHAP) to sn-glycerol 3-phosphate (G3P), the key precursor for phospholipid synthesis. This chain is Glycerol-3-phosphate dehydrogenase [NAD(P)+], found in Alcanivorax borkumensis (strain ATCC 700651 / DSM 11573 / NCIMB 13689 / SK2).